The primary structure comprises 181 residues: MSRIGKKPVVVPKGVTVTIDGSTVTVKGPKGTLTRTFDPRIKISLIEDQIIVERTSEEKEVRALHGTTRALIQNMVTGVSEGFSVTLKIRGVGYRAELKGKDLQMSLGFSHPVVIQSIEGIQFQVPSADTVVVSGIDKQLVTQVAANIRRYRIPDAYKGKGIWYEGEQRPLKPGKAVGKGK.

This sequence belongs to the universal ribosomal protein uL6 family. In terms of assembly, part of the 50S ribosomal subunit.

This protein binds to the 23S rRNA, and is important in its secondary structure. It is located near the subunit interface in the base of the L7/L12 stalk, and near the tRNA binding site of the peptidyltransferase center. The protein is Large ribosomal subunit protein uL6 of Coprothermobacter proteolyticus (strain ATCC 35245 / DSM 5265 / OCM 4 / BT).